The primary structure comprises 249 residues: Meiotic drive suppressor wtf25 (249 aa).

Positions 1-40 are disordered; it reads MKNNYTSLKSPLDEEDELKTDHEIDLEKGPLPEYDSEEEG. Residues 19–30 show a composition bias toward basic and acidic residues; that stretch reads KTDHEIDLEKGP. 4 helical membrane passes run 73-93, 110-130, 151-170, and 187-207; these read LLII…PAFC, WTLF…LTYF, NMIF…LKAE, and SASA…AETV.

Belongs to the WTF family. Homomer. Interacts with other proteins that exhibit high sequence similarity.

It is found in the spore membrane. Its subcellular location is the vacuole membrane. Acts as a suppressor component of the dual wtf meiotic drive system, and can suppress but not confer meiotic drive by compatible poisons. Wtf meiotic drive systems promote unequal transmission of alleles from the parental zygote to progeny spores by encoding a poison and an antidote from the same locus; the poison is trans-acting and forms toxic aggregates in all spores within an ascus, wherease the antidote is spore-specific and targets aggregates for degradation by the vacuole. Meiotic drive by wtf systems therefore lead to poisoning of all progeny that do not inherit the dual poison/antidote allele, or express a compatible antidote. This Schizosaccharomyces pombe (strain 972 / ATCC 24843) (Fission yeast) protein is Meiotic drive suppressor wtf25.